Here is a 732-residue protein sequence, read N- to C-terminus: Probable ATP-dependent RNA helicase DHX35 homolog (732 aa).

Positions 1-50 (MSYHPGHGHRQEPRKGAGARRGFARPDDSADAPRTGPLIFEERSTENAGA) are disordered. In terms of domain architecture, Helicase ATP-binding spans 87-251 (LYMCERYRTI…FEMNETGNSD (165 aa)). An ATP-binding site is contributed by 100–107 (GETGCGKS). Residues 198-201 (DEAH) carry the DEAH box motif. Residues 283–457 (AVDTVINIHK…STILQLKALG (175 aa)) form the Helicase C-terminal domain.

The protein belongs to the DEAD box helicase family. DEAH subfamily.

The catalysed reaction is ATP + H2O = ADP + phosphate + H(+). The protein is Probable ATP-dependent RNA helicase DHX35 homolog of Caenorhabditis elegans.